An 840-amino-acid polypeptide reads, in one-letter code: Probable alpha-glucuronidase A (840 aa).

The signal sequence occupies residues 1–19 (MWSGIPIFALLSSIGIAAA). N-linked (GlcNAc...) asparagine glycosylation is found at Asn-50, Asn-149, Asn-222, Asn-262, Asn-279, Asn-310, Asn-465, Asn-527, Asn-576, Asn-610, Asn-682, Asn-723, and Asn-732.

This sequence belongs to the glycosyl hydrolase 67 family.

The protein resides in the secreted. The catalysed reaction is an alpha-D-glucuronoside + H2O = D-glucuronate + an alcohol. In terms of biological role, alpha-glucuronidase involved in the hydrolysis of xylan, a major structural heterogeneous polysaccharide found in plant biomass representing the second most abundant polysaccharide in the biosphere, after cellulose. Releases 4-O-methylglucuronic acid from xylan. This chain is Probable alpha-glucuronidase A (aguA), found in Aspergillus fumigatus (strain CBS 144.89 / FGSC A1163 / CEA10) (Neosartorya fumigata).